The following is a 121-amino-acid chain: Ribonuclease P protein component (121 aa).

It belongs to the RnpA family. In terms of assembly, consists of a catalytic RNA component (M1 or rnpB) and a protein subunit.

It carries out the reaction Endonucleolytic cleavage of RNA, removing 5'-extranucleotides from tRNA precursor.. Its function is as follows. RNaseP catalyzes the removal of the 5'-leader sequence from pre-tRNA to produce the mature 5'-terminus. It can also cleave other RNA substrates such as 4.5S RNA. The protein component plays an auxiliary but essential role in vivo by binding to the 5'-leader sequence and broadening the substrate specificity of the ribozyme. The chain is Ribonuclease P protein component from Desulfosudis oleivorans (strain DSM 6200 / JCM 39069 / Hxd3) (Desulfococcus oleovorans).